A 233-amino-acid polypeptide reads, in one-letter code: Purine nucleoside phosphorylase DeoD-type (233 aa).

H4 contacts a purine D-ribonucleoside. Phosphate-binding positions include G20, R24, R43, and 87–90; that span reads RIGT. Residues 179–181 and 203–204 each bind a purine D-ribonucleoside; these read EME and SD. The active-site Proton donor is the D204.

The protein belongs to the PNP/UDP phosphorylase family. In terms of assembly, homohexamer; trimer of homodimers.

The catalysed reaction is a purine D-ribonucleoside + phosphate = a purine nucleobase + alpha-D-ribose 1-phosphate. The enzyme catalyses a purine 2'-deoxy-D-ribonucleoside + phosphate = a purine nucleobase + 2-deoxy-alpha-D-ribose 1-phosphate. Catalyzes the reversible phosphorolytic breakdown of the N-glycosidic bond in the beta-(deoxy)ribonucleoside molecules, with the formation of the corresponding free purine bases and pentose-1-phosphate. This chain is Purine nucleoside phosphorylase DeoD-type, found in Helicobacter pylori (strain J99 / ATCC 700824) (Campylobacter pylori J99).